The following is a 203-amino-acid chain: Cardiotrophin-1 (203 aa).

It belongs to the IL-6 superfamily. As to expression, highly expressed in heart, skeletal muscle, liver, lung and kidney. Lower levels in testis and brain. No expression in spleen.

The protein resides in the secreted. Functionally, induces cardiac myocyte hypertrophy in vitro. Binds to and activates the ILST/gp130 receptor. This chain is Cardiotrophin-1 (Ctf1), found in Mus musculus (Mouse).